The following is a 406-amino-acid chain: Pygopus homolog 2 (406 aa).

Disordered regions lie at residues 1–73 (MAAS…DHLV) and 106–323 (VQGG…PQPP). Position 2 is an N-acetylalanine (A2). The residue at position 40 (S40) is a Phosphoserine. The Nuclear localization signal motif lies at 41 to 47 (PEKKRRK). 2 stretches are compositionally biased toward pro residues: residues 131–141 (RQPPPFPPNPM) and 149–158 (PQGPGYPPPG). Residues 164–179 (SQPFNQPLGQNFSPPS) are compositionally biased toward polar residues. Positions 236-252 (SLPPNTSPFPGPDPGFP) are enriched in pro residues. Positions 285 to 296 (NGNQPSFPPNSS) are enriched in polar residues. At T302 the chain carries Phosphothreonine. The PHD-type zinc-finger motif lies at 327 to 385 (VYPCGACRSEVNDDQDAILCEASCQKWFHRECTGMTESAYGLLTTEASAVWACDLCLKT).

As to quaternary structure, binds to BCL9 via the PHD-type zinc finger motif, and thereby becomes part of the nuclear beta-catenin/TCF complex.

The protein resides in the nucleus. Its function is as follows. Involved in signal transduction through the Wnt pathway. The sequence is that of Pygopus homolog 2 (PYGO2) from Homo sapiens (Human).